The following is a 2371-amino-acid chain: Reducing polyketide synthase DEP5 (2371 aa).

In terms of domain architecture, Ketosynthase family 3 (KS3) spans 47–477 (LEPIAVVGMG…GTNAHTIIES (431 aa)). Catalysis depends on for beta-ketoacyl synthase activity residues cysteine 221, histidine 358, and histidine 399. Residues 593–905 (VFTGQGAQWA…QYLPTLIRGS (313 aa)) form a malonyl-CoA:ACP transacylase (MAT) domain region. Serine 685 acts as the For malonyltransferase activity in catalysis. Positions 982-1120 (HDVLGQLTIG…GSIRINTSNK (139 aa)) are N-terminal hotdog fold. The dehydratase (DH) domain stretch occupies residues 982–1158 (HDVLGQLTIG…FNYGPTFQDM (177 aa)). Residues 982–1286 (HDVLGQLTIG…CTAYEAAIPQ (305 aa)) enclose the PKS/mFAS DH domain. Histidine 1014 functions as the Proton acceptor; for dehydratase activity in the catalytic mechanism. Residues 1132 to 1286 (PQRASGKLWN…CTAYEAAIPQ (155 aa)) are C-terminal hotdog fold. Aspartate 1195 acts as the Proton donor; for dehydratase activity in catalysis. Residues 1656–1964 (GKVEAGKVVF…QSLSSTETVL (309 aa)) form an enoyl reductase (ER) domain region. The tract at residues 1988-2163 (ATYLLVGCLG…KHACAVVLPM (176 aa)) is ketoreductase (KR) domain. The 79-residue stretch at 2286 to 2364 (SLVRDHFISK…KFAELVCAAQ (79 aa)) folds into the Carrier domain. The residue at position 2323 (serine 2323) is an O-(pantetheine 4'-phosphoryl)serine.

Its pathway is polyketide biosynthesis. Functionally, part of the gene cluster that mediates the biosynthesis of depudecin, a highly oxidized eleven-carbon linear polyketide that acts as a histone deacetylase (HDAC) inhibitor and makes a small contribution to pathogenesis. The reducing polyketide synthase DEP5 is the central enzyme in depudecin biosynthesis by yielding the backbone polyketide chain. The monooxygenases DEP2 and DEP4, as well as the uncharacterized protein DEP1, then act as tailoring enzymes to modify the intermediate polyketide chain into depudecin. The polypeptide is Reducing polyketide synthase DEP5 (Fusarium langsethiae).